A 361-amino-acid chain; its full sequence is Ribosomal RNA large subunit methyltransferase M (361 aa).

S-adenosyl-L-methionine is bound by residues S187, 220 to 223, D239, D259, and D276; that span reads CPGG. The Proton acceptor role is filled by K305.

It belongs to the class I-like SAM-binding methyltransferase superfamily. RNA methyltransferase RlmE family. RlmM subfamily. As to quaternary structure, monomer.

It localises to the cytoplasm. It catalyses the reaction cytidine(2498) in 23S rRNA + S-adenosyl-L-methionine = 2'-O-methylcytidine(2498) in 23S rRNA + S-adenosyl-L-homocysteine + H(+). Its function is as follows. Catalyzes the 2'-O-methylation at nucleotide C2498 in 23S rRNA. This Shewanella putrefaciens (strain CN-32 / ATCC BAA-453) protein is Ribosomal RNA large subunit methyltransferase M.